The primary structure comprises 446 residues: Fatty acid desaturase 2 (446 aa).

Residues 1-132 (MGMGGQSGEG…EDMRLFKSNP (132 aa)) lie on the Cytoplasmic side of the membrane. One can recognise a Cytochrome b5 heme-binding domain in the interval 20-97 (EAQYSWEEIQ…LKPLYIGELA (78 aa)). A helical membrane pass occupies residues 133–153 (AFFIFYLFHILLIEFLAWCTL). A topological domain (lumenal) is located at residue His154. Residues 155-175 (YLGTGWIPAIITVLLLTISQA) form a helical membrane-spanning segment. Over 176-265 (QAGWLQHDFG…IKYLPYNHQH (90 aa)) the chain is Cytoplasmic. The short motif at 182–186 (HDFGH) is the Histidine box-1 element. The Histidine box-2 signature appears at 219-223 (HFQHH). The helical transmembrane segment at 266-286 (LYFFLIGPPLLIPVYFTVQII) threads the bilayer. Residues 287–307 (KTMIARKDWVDLAWSVSYYVR) lie on the Lumenal side of the membrane. A helical membrane pass occupies residues 308-328 (FFFTFVPFFGVLGSLALLNAV). The Cytoplasmic segment spans residues 329–446 (RFFESHWFVW…QLWLDAYLHK (118 aa)). A Histidine box-3 motif is present at residues 384-388 (QIEHH).

Belongs to the fatty acid desaturase type 1 family.

Its subcellular location is the endoplasmic reticulum membrane. Its pathway is lipid metabolism; polyunsaturated fatty acid biosynthesis. Functionally, component of a lipid metabolic pathway that catalyzes biosynthesis of highly unsaturated fatty acids (HUFA) from precursor essential polyunsaturated fatty acids (PUFA) linoleic acid (LA) (18:2n-6) and alpha-linolenic acid (ALA) (18:3n-3). Catalyzes the first and rate limiting step in this pathway which is the desaturation of LA (18:2n-6) and ALA (18:3n-3) into gamma-linoleic acid (GLA) (18:3n-6) and stearidonic acid (18:4n-3) respectively and other desaturation steps. Highly unsaturated fatty acids (HUFA) play pivotal roles in many biological functions. The chain is Fatty acid desaturase 2 (fads2) from Xenopus laevis (African clawed frog).